Consider the following 522-residue polypeptide: Protein GDS1 (522 aa).

Disordered regions lie at residues 56–88 (ALDD…PKKD), 222–268 (QQLE…SSNS), 300–391 (LSPS…SHNA), and 433–489 (STQT…SRNE). Residues 62-73 (LAGSSFSSSQEI) are compositionally biased toward polar residues. Residues 74–88 (KATKPKKDFGAPKKD) show a composition bias toward basic and acidic residues. 4 stretches are compositionally biased toward polar residues: residues 222 to 236 (QQLE…FNSN), 244 to 260 (SSNQ…SMTD), 300 to 314 (LSPS…LLTP), and 355 to 366 (SQSLSVLSTPKK). Positions 368-378 (SSASLSTFASS) are enriched in low complexity. Residues 379-391 (KNISPDSSLSHNA) are compositionally biased toward polar residues. Low complexity predominate over residues 439-467 (ESSSESSQYNSSSSSPVNSAAASSAESLS). Residues 468-489 (DINSSQDNGRESNPSSQESRNE) show a composition bias toward polar residues.

Involved in nuclear control of mitochondria. This is Protein GDS1 (GDS1) from Saccharomyces cerevisiae (strain ATCC 204508 / S288c) (Baker's yeast).